A 225-amino-acid polypeptide reads, in one-letter code: Elongation factor 1-beta (225 aa).

Residues Gly2 to Val84 enclose the GST C-terminal domain. Position 7 is an N6-acetyllysine (Lys7). Phosphoserine is present on residues Ser8 and Ser42. A disordered region spans residues Lys78–Ala115. Phosphothreonine is present on residues Thr88 and Thr93. Ser95 and Ser106 each carry phosphoserine. Residues Lys96–Glu113 show a composition bias toward acidic residues. A Glycyl lysine isopeptide (Lys-Gly) (interchain with G-Cter in SUMO2) cross-link involves residue Lys147. Ser174 is modified (phosphoserine).

Belongs to the EF-1-beta/EF-1-delta family. As to quaternary structure, EF-1 is composed of 4 subunits: alpha, beta (alpha subunit of the eEF1B subcomplex), delta (beta subunit of the eEF1B subcomplex), and gamma (gamma subunit of the eEF1B subcomplex). Interacts with elongation factor EEF1A1. Phosphorylation affects the GDP/GTP exchange rate.

Catalytic subunit of the guanine nucleotide exchange factor (GEF) (eEF1B subcomplex) of the eukaryotic elongation factor 1 complex (eEF1). Stimulates the exchange of GDP for GTP on elongation factor 1A (eEF1A), probably by displacing GDP from the nucleotide binding pocket in eEF1A. This is Elongation factor 1-beta (EEF1B2) from Homo sapiens (Human).